A 735-amino-acid polypeptide reads, in one-letter code: MSDSKCPVTGKSSRQVAGGGTSNRDWWPNQLNLQILHQQSTKSNPMGEGFNYRQEFTMLDLAAVKKDLVALMTDSQDWWPADWGHYGGLMIRMAWHSAGTYRMGDGRGGAGSGSQRLAPLNSWPDNVNLDKARRLLWPVKQKYGRKISWADLMILAGNCALESMGFKTFGFGGGREDIWEPQEDVYWGGEKEWLATSDKPYSRYSGERDLDNPLAAVQMGLIYINPEGPDGNPDPVASGRDVRETFARMAMNDEETVALVAGGHTFGKCHGAGTADHVGPEPEAAPLEAQGLGWISSYKSGKGGDTISSGIEGAWKPNPTTWDMGYLKVLFKYEWELVKSPAGAHQWLAKDVADEDMVVDAHDPAKKRRPMMTTADLSLRFDPAYEKIARRYLANPDEFADAFARAWFKLTHRDMGPRSRYLGPEVPAEELIWQDPVPAATHELINNSDVADLKVTILATGLSISQLVTTAWASASTFRGSDKRGGANGARIRLAPQKDWEVNQPGQLAKVLETLAAVQQEFNAAQSGNKRVSLADLIVLGGCAAVEQAARNAGQTVAVPFTPGRTDASQEQTDTASFEVLEPKADGFRNYQKEKYAVSAEELLVDRAQLLTLTAPEMTVLIGGMRVLNANFGNARHGVFTKRPEALTNDFFVNLLDMATIWKATSEDQDLFEGRDRTSGELKWTATRVDLIFGSNSQLRAIAEVYGCEDSQEKFLQDFAAAWDKVMQADRFELV.

A disordered region spans residues 1-25 (MSDSKCPVTGKSSRQVAGGGTSNRD). A cross-link (tryptophyl-tyrosyl-methioninium (Trp-Tyr) (with M-249)) is located at residues 95-223 (WHSAGTYRMG…LAAVQMGLIY (129 aa)). Residue H96 is the Proton acceptor of the active site. Residues 223-249 (YINPEGPDGNPDPVASGRDVRETFARM) constitute a cross-link (tryptophyl-tyrosyl-methioninium (Tyr-Met) (with W-95)). H264 contributes to the heme b binding site.

Belongs to the peroxidase family. Peroxidase/catalase subfamily. As to quaternary structure, homodimer or homotetramer. It depends on heme b as a cofactor. In terms of processing, formation of the three residue Trp-Tyr-Met cross-link is important for the catalase, but not the peroxidase activity of the enzyme.

It catalyses the reaction H2O2 + AH2 = A + 2 H2O. The catalysed reaction is 2 H2O2 = O2 + 2 H2O. Its function is as follows. Bifunctional enzyme with both catalase and broad-spectrum peroxidase activity. In Trichlorobacter lovleyi (strain ATCC BAA-1151 / DSM 17278 / SZ) (Geobacter lovleyi), this protein is Catalase-peroxidase.